The chain runs to 146 residues: Hemoglobin subunit beta (146 aa).

Residues 2–146 form the Globin domain; the sequence is QWSDSERTII…VVMFLGKQYH (145 aa). Positions 63 and 92 each coordinate heme b.

This sequence belongs to the globin family. Heterotetramer of two alpha chains and two beta chains. Red blood cells.

Its function is as follows. Involved in oxygen transport from the lung to the various peripheral tissues. The chain is Hemoglobin subunit beta (hbb) from Artedidraco orianae (Barbeled plunderfish).